Consider the following 202-residue polypeptide: 3-isopropylmalate dehydratase small subunit (202 aa).

The protein belongs to the LeuD family. LeuD type 1 subfamily. As to quaternary structure, heterodimer of LeuC and LeuD.

It catalyses the reaction (2R,3S)-3-isopropylmalate = (2S)-2-isopropylmalate. It functions in the pathway amino-acid biosynthesis; L-leucine biosynthesis; L-leucine from 3-methyl-2-oxobutanoate: step 2/4. Its function is as follows. Catalyzes the isomerization between 2-isopropylmalate and 3-isopropylmalate, via the formation of 2-isopropylmaleate. This is 3-isopropylmalate dehydratase small subunit from Nocardia farcinica (strain IFM 10152).